Reading from the N-terminus, the 322-residue chain is ATP-dependent 6-phosphofructokinase (322 aa).

Gly-11 provides a ligand contact to ATP. Position 21–25 (21–25 (RAVVR)) interacts with ADP. ATP is bound by residues 72–73 (RC) and 102–105 (GDGS). Asp-103 contacts Mg(2+). Substrate is bound at residue 127–129 (TID). Residue Asp-129 is the Proton acceptor of the active site. Position 156 (Arg-156) interacts with ADP. Substrate contacts are provided by residues Arg-164 and 171–173 (MGR). Residues 187–189 (GAE), Arg-213, and 215–217 (KKH) each bind ADP. Residues Glu-224, Arg-245, and 251 to 254 (HVQR) each bind substrate.

The protein belongs to the phosphofructokinase type A (PFKA) family. ATP-dependent PFK group I subfamily. Prokaryotic clade 'B1' sub-subfamily. In terms of assembly, homotetramer. Mg(2+) is required as a cofactor.

Its subcellular location is the cytoplasm. The enzyme catalyses beta-D-fructose 6-phosphate + ATP = beta-D-fructose 1,6-bisphosphate + ADP + H(+). Its pathway is carbohydrate degradation; glycolysis; D-glyceraldehyde 3-phosphate and glycerone phosphate from D-glucose: step 3/4. With respect to regulation, allosterically activated by ADP and other diphosphonucleosides, and allosterically inhibited by phosphoenolpyruvate. In terms of biological role, catalyzes the phosphorylation of D-fructose 6-phosphate to fructose 1,6-bisphosphate by ATP, the first committing step of glycolysis. This chain is ATP-dependent 6-phosphofructokinase, found in Staphylococcus aureus (strain JH1).